The sequence spans 255 residues: tRNA (guanine-N(1)-)-methyltransferase (255 aa).

S-adenosyl-L-methionine is bound by residues Gly-113 and 133–138 (IGDYVL).

The protein belongs to the RNA methyltransferase TrmD family. As to quaternary structure, homodimer.

The protein resides in the cytoplasm. The enzyme catalyses guanosine(37) in tRNA + S-adenosyl-L-methionine = N(1)-methylguanosine(37) in tRNA + S-adenosyl-L-homocysteine + H(+). Its function is as follows. Specifically methylates guanosine-37 in various tRNAs. This is tRNA (guanine-N(1)-)-methyltransferase from Shigella flexneri serotype 5b (strain 8401).